We begin with the raw amino-acid sequence, 512 residues long: N-fatty-acyl-amino acid synthase/hydrolase PM20D1 (512 aa).

The first 34 residues, 1–34 (MAVSRWKAVGSTLLAAFLVGLVVLIAVLLIRTYT), serve as a signal peptide directing secretion. Asn-45 and Asn-81 each carry an N-linked (GlcNAc...) asparagine glycan. Residue His-134 participates in Zn(2+) binding. Asp-136 is a catalytic residue. Asp-166 contributes to the Zn(2+) binding site. Glu-200 (proton acceptor) is an active-site residue. Zn(2+) contacts are provided by Glu-201 and Asp-227. An N-linked (GlcNAc...) asparagine glycan is attached at Asn-450. His-472 lines the Zn(2+) pocket.

Belongs to the peptidase M20A family.

It is found in the secreted. The catalysed reaction is an N-acyl-L-amino acid + H2O = an L-alpha-amino acid + a carboxylate. The enzyme catalyses an N-acyl-aromatic L-alpha-amino acid + H2O = an aromatic L-alpha-amino acid + a carboxylate. It carries out the reaction N-(5Z,8Z,11Z,14Z)-eicosatetraenoyl-glycine + H2O = (5Z,8Z,11Z,14Z)-eicosatetraenoate + glycine. It catalyses the reaction N-hexadecanoyl-L-phenylalanine + H2O = hexadecanoate + L-phenylalanine. The catalysed reaction is N-octadecanoyl-L-phenylalanine + H2O = octadecanoate + L-phenylalanine. The enzyme catalyses N-(4Z,7Z,10Z,13Z,16Z,19Z-docosahexaenoyl)-L-phenylalanine + H2O = (4Z,7Z,10Z,13Z,16Z,19Z)-docosahexaenoate + L-phenylalanine. It carries out the reaction N-(9Z-octadecenoyl)-L-asparagine + H2O = L-asparagine + (9Z)-octadecenoate. It catalyses the reaction (9Z)-octadecenoate + glycine = N-(9Z-octadecenoyl)glycine + H2O. The catalysed reaction is N-(9Z-octadecenoyl)-L-lysine + H2O = L-lysine + (9Z)-octadecenoate. The enzyme catalyses N-(9Z-octadecenoyl)-L-methionine + H2O = (9Z)-octadecenoate + L-methionine. It carries out the reaction N-(9Z-octadecenoyl)-L-serine + H2O = L-serine + (9Z)-octadecenoate. It catalyses the reaction N-(9Z-octadecenoyl)-L-tryptophan + H2O = L-tryptophan + (9Z)-octadecenoate. The catalysed reaction is N-(9Z-octadecenoyl)-L-tyrosine + H2O = L-tyrosine + (9Z)-octadecenoate. The enzyme catalyses N-(9Z-octadecenoyl)-L-glutamine + H2O = L-glutamine + (9Z)-octadecenoate. It carries out the reaction N-(5Z,8Z,11Z,14Z-eicosatetraenoyl)-L-serine + H2O = (5Z,8Z,11Z,14Z)-eicosatetraenoate + L-serine. It catalyses the reaction (5Z,8Z,11Z,14Z)-eicosatetraenoate + L-phenylalanine = N-(5Z,8Z,11Z,14Z-eicosatetraenoyl)-L-phenylalanine + H2O. The catalysed reaction is N-(9Z-octadecenoyl)-L-leucine + H2O = L-leucine + (9Z)-octadecenoate. The enzyme catalyses L-phenylalanine + (9Z)-octadecenoate = N-(9Z-octadecenoyl)-L-phenylalanine + H2O. The protein operates within amino-acid metabolism. Its pathway is energy metabolism; electron transfer. It functions in the pathway lipid metabolism; fatty acid metabolism. With respect to regulation, lipoproteins are powerful coactivators of PM20D1 activity in vitro and NAA biosynthesis in vivo. Secreted enzyme that regulates the endogenous N-fatty acyl amino acid (NAAs) tissue and circulating levels by functioning as a bidirectional NAA synthase/hydrolase. It condenses free fatty acids and free amino acids to generate NAAs and bidirectionally catalyzes the reverse hydrolysis reaction. Some of these NAAs stimulate oxidative metabolism via mitochondrial uncoupling, increasing energy expenditure in a UPC1-independent manner. Thereby, this secreted protein may indirectly regulate whole body energy expenditure. PM20D1 circulates in tight association with both low- and high-density (LDL and HDL,respectively) lipoprotein particles. In Xenopus tropicalis (Western clawed frog), this protein is N-fatty-acyl-amino acid synthase/hydrolase PM20D1.